Reading from the N-terminus, the 479-residue chain is Ribulose bisphosphate carboxylase large chain (479 aa).

The propeptide occupies 1-2; sequence MS. Residues Asn-123 and Thr-173 each contribute to the substrate site. Lys-175 (proton acceptor) is an active-site residue. A substrate-binding site is contributed by Lys-177. 3 residues coordinate Mg(2+): Lys-201, Asp-203, and Glu-204. Residue Lys-201 is modified to N6-carboxylysine. Residue Ser-208 is modified to Phosphoserine. Residue His-294 is the Proton acceptor of the active site. Substrate is bound by residues Arg-295 and His-327. Position 330 is a phosphothreonine (Thr-330). Ser-379 contributes to the substrate binding site.

Belongs to the RuBisCO large chain family. Type I subfamily. As to quaternary structure, heterohexadecamer of 8 large chains and 8 small chains; disulfide-linked. The disulfide link is formed within the large subunit homodimers. Mg(2+) serves as cofactor. Post-translationally, the disulfide bond which can form in the large chain dimeric partners within the hexadecamer appears to be associated with oxidative stress and protein turnover.

Its subcellular location is the plastid. The protein resides in the chloroplast. It carries out the reaction 2 (2R)-3-phosphoglycerate + 2 H(+) = D-ribulose 1,5-bisphosphate + CO2 + H2O. The enzyme catalyses D-ribulose 1,5-bisphosphate + O2 = 2-phosphoglycolate + (2R)-3-phosphoglycerate + 2 H(+). Its function is as follows. RuBisCO catalyzes two reactions: the carboxylation of D-ribulose 1,5-bisphosphate, the primary event in carbon dioxide fixation, as well as the oxidative fragmentation of the pentose substrate in the photorespiration process. Both reactions occur simultaneously and in competition at the same active site. In Barbarea verna (Land cress), this protein is Ribulose bisphosphate carboxylase large chain.